Reading from the N-terminus, the 311-residue chain is Transcriptional repressor scratch 2 (311 aa).

The segment at 1–20 is SNAG domain; sequence MPRSFLVKKIKADGFQCSGV. Disordered regions lie at residues 71-90 and 120-156; these read PAYP…PQSS and RRRA…ATAG. Gly residues predominate over residues 124 to 146; it reads GAGGDAAGAGDAGGGGGGGGGGE. C2H2-type zinc fingers lie at residues 161 to 183, 192 to 214, 218 to 240, and 246 to 268; these read HACA…KQTH, RKCP…VLTH, HKCG…MRSH, and FGCA…MQTH. The C2H2-type 5; atypical zinc-finger motif lies at 274–297; the sequence is YRCRQCDKSFALKSYLHKHCEAAC.

The protein belongs to the snail C2H2-type zinc-finger protein family.

It is found in the nucleus. May be involved in transcriptional regulation. This is Transcriptional repressor scratch 2 (Scrt2) from Mus musculus (Mouse).